The chain runs to 236 residues: Leucyl/phenylalanyl-tRNA--protein transferase (236 aa).

This sequence belongs to the L/F-transferase family.

The protein localises to the cytoplasm. The enzyme catalyses N-terminal L-lysyl-[protein] + L-leucyl-tRNA(Leu) = N-terminal L-leucyl-L-lysyl-[protein] + tRNA(Leu) + H(+). It carries out the reaction N-terminal L-arginyl-[protein] + L-leucyl-tRNA(Leu) = N-terminal L-leucyl-L-arginyl-[protein] + tRNA(Leu) + H(+). It catalyses the reaction L-phenylalanyl-tRNA(Phe) + an N-terminal L-alpha-aminoacyl-[protein] = an N-terminal L-phenylalanyl-L-alpha-aminoacyl-[protein] + tRNA(Phe). Its function is as follows. Functions in the N-end rule pathway of protein degradation where it conjugates Leu, Phe and, less efficiently, Met from aminoacyl-tRNAs to the N-termini of proteins containing an N-terminal arginine or lysine. This Idiomarina loihiensis (strain ATCC BAA-735 / DSM 15497 / L2-TR) protein is Leucyl/phenylalanyl-tRNA--protein transferase.